Here is a 1097-residue protein sequence, read N- to C-terminus: DNA-directed RNA polymerase subunit beta (1097 aa).

Residues 1072–1097 (QDVNPRRSTPSRPTYESLGVADYDED) form a disordered region.

The protein belongs to the RNA polymerase beta chain family. In cyanobacteria the RNAP catalytic core is composed of 2 alpha, 1 beta, 1 beta', 1 gamma and 1 omega subunit. When a sigma factor is associated with the core the holoenzyme is formed, which can initiate transcription.

The catalysed reaction is RNA(n) + a ribonucleoside 5'-triphosphate = RNA(n+1) + diphosphate. Its function is as follows. DNA-dependent RNA polymerase catalyzes the transcription of DNA into RNA using the four ribonucleoside triphosphates as substrates. In Synechococcus sp. (strain WH7803), this protein is DNA-directed RNA polymerase subunit beta.